Here is a 159-residue protein sequence, read N- to C-terminus: Phosphopantetheine adenylyltransferase (159 aa).

Thr-10 contributes to the substrate binding site. ATP is bound by residues 10–11 (TF) and His-18. Residues Lys-42, Met-74, and Arg-88 each coordinate substrate. Residues 89–91 (GLR), Glu-99, and 124–130 (WSFISSS) contribute to the ATP site.

It belongs to the bacterial CoaD family. Homohexamer. It depends on Mg(2+) as a cofactor.

Its subcellular location is the cytoplasm. The enzyme catalyses (R)-4'-phosphopantetheine + ATP + H(+) = 3'-dephospho-CoA + diphosphate. It participates in cofactor biosynthesis; coenzyme A biosynthesis; CoA from (R)-pantothenate: step 4/5. Reversibly transfers an adenylyl group from ATP to 4'-phosphopantetheine, yielding dephospho-CoA (dPCoA) and pyrophosphate. This chain is Phosphopantetheine adenylyltransferase, found in Enterobacter sp. (strain 638).